The chain runs to 151 residues: Arginine repressor (151 aa).

Belongs to the ArgR family.

It localises to the cytoplasm. It functions in the pathway amino-acid biosynthesis; L-arginine biosynthesis [regulation]. Functionally, regulates arginine biosynthesis genes. The sequence is that of Arginine repressor from Moorella thermoacetica (strain ATCC 39073 / JCM 9320).